Reading from the N-terminus, the 214-residue chain is Holliday junction branch migration complex subunit RuvA (214 aa).

Residues 1–67 (MVGWLKGLIV…ADNWQFFGFK (67 aa)) are domain I. Residues 68 to 146 (STQERDIFRE…AFAGMDPAPS (79 aa)) are domain II. The segment at 147–154 (LAEGVSSE) is flexible linker. Positions 155–214 (QMPESGADVEATLSMLGYDDLEVRRAIRAIAEGSDGPPPPGDDQDAWLRGCLQWLSRDSA) are domain III.

It belongs to the RuvA family. Homotetramer. Forms an RuvA(8)-RuvB(12)-Holliday junction (HJ) complex. HJ DNA is sandwiched between 2 RuvA tetramers; dsDNA enters through RuvA and exits via RuvB. An RuvB hexamer assembles on each DNA strand where it exits the tetramer. Each RuvB hexamer is contacted by two RuvA subunits (via domain III) on 2 adjacent RuvB subunits; this complex drives branch migration. In the full resolvosome a probable DNA-RuvA(4)-RuvB(12)-RuvC(2) complex forms which resolves the HJ.

The protein localises to the cytoplasm. Functionally, the RuvA-RuvB-RuvC complex processes Holliday junction (HJ) DNA during genetic recombination and DNA repair, while the RuvA-RuvB complex plays an important role in the rescue of blocked DNA replication forks via replication fork reversal (RFR). RuvA specifically binds to HJ cruciform DNA, conferring on it an open structure. The RuvB hexamer acts as an ATP-dependent pump, pulling dsDNA into and through the RuvAB complex. HJ branch migration allows RuvC to scan DNA until it finds its consensus sequence, where it cleaves and resolves the cruciform DNA. This chain is Holliday junction branch migration complex subunit RuvA, found in Synechococcus sp. (strain CC9605).